The primary structure comprises 1532 residues: MKAKRFKINAISLSIFLAYALTPYSEAALVRDDVDYQIFRDFAENKGKFFVGATDLSVKNKRGQNIGNALSNVPMIDFSVADVNKRIATVVDPQYAVSVKHAKAEVHTFYYGQYNGHNDVADKENEYRVVEQNNYEPHKAWGASNLGRLEDYNMARFNKFVTEVAPIAPTDAGGGLDTYKDKNRFSSFVRIGAGRQLVYEKGVYHQEGNEKGYDLRDLSQAYRYAIAGTPYKDINIDQTMNTEGLIGFGNHNKQYSAEELKQALSQDALTNYGVLGDSGSPLFAFDKQKNQWVFLGTYDYWAGYGKKSWQEWNIYKKEFADKIKQHDNAGTVKGNGEHHWKTTGTNSHIGSTAVRLANNEGDANNGQNVTFEDNGTLVLNQNINQGAGGLFFKGDYTVKGANNDITWLGAGIDVADGKKVVWQVKNPNGDRLAKIGKGTLEINGTGVNQGQLKVGDGTVILNQKADADKKVQAFSQVGIVSGRGTLVLNSSNQINPDNLYFGFRGGRLDANGNDLTFEHIRNVDEGARIVNHNTDHASTITLTGKSLITNPNSLSVHSIQNDYDEDDYSYYYRPRRPIPQGKDLYYKNYRYYALKSGGRLNAPMPENGVAENNDWIFMGYTQEEARKNAMNHKNNRRIGDFGGFFDEENGKGHNGALNLNFNGKSAQKRFLLTGGANLNGKISVTQGNVLLSGRPTPHARDFVNKSSARKDAHFSKNNEVVFEDDWINRTFKAAEIAVNQSASFSSGRNVSDITANITATDNAKVNLGYKNGDEVCVRSDYTGYVTCNTGNLSDKALNSFDATRINGNVNLNQNAALVLGKAALWGKIQGQGNSRVSLNQHSKWHLTGDSQVHNLSLADSHIHLNNASDAQSANKYHTIKINHLSGNGHFHYLTDLAKNLGDKVLVKESASGHYQLHVQNKTGEPNQEGLDLFDASSVQDRSRLFVSLANHYVDLGALRYTIKTENGITRLYNPYAGNGRPVKPAPSPAANTASQAQKATQTDGAQIAKPQNIVVAPPSPQANQAEEALRQQAKAEQVKRQQAAEAEKVARQKDEEAKRKAAEIARQQEEARKAAELAAKQKAEAERKARELARQKAEEASHQANAKPKRRRRRAILPRPPAPVFSLDDYDAKDNSESSIGNLARVIPRMGRELINDYEEIPLEELEDEAEEERRQATQFHSKSRNRRAISSEPSSDEDASESVSTSDKHPQDNTELHEKVETAGLQPRAAQPRTQAAAQADAVSTNTNSALSDAMASTQSILLDTGAYLTRHIAQKSRADAEKNSVWMSNTGYGRDYASAQYRRFSSKRTQTQIGIDRSLSENMQIGGVLTYSDSQHTFDQAGGKNTFVQANLYGKYYLNDAWYVAGDIGAGSLRSRLQTQQKANFNRTSIQTGLTLGNTLKINQFEIVPSAGIRYSRLSSADYKLGDDSVKVSSMAVKTLTAGLDFAYRFKVGNLTVKPLLSAAYFANYGKGGVNVGGKSFAYKADNQQQYSAGVALLYRNVTLNVNGSITKGKQLEKQKSGQIKIQIRF.

The N-terminal stretch at 1-27 is a signal peptide; the sequence is MKAKRFKINAISLSIFLAYALTPYSEA. Positions 28–322 constitute a Peptidase S6 domain; the sequence is ALVRDDVDYQ…NIYKKEFADK (295 aa). Ser278 is an active-site residue. 2 disordered regions span residues 979–1136 and 1166–1217; these read GRPV…KDNS and LEDE…NTEL. Positions 989-1004 are enriched in polar residues; the sequence is AANTASQAQKATQTDG. The segment covering 1045–1101 has biased composition (basic and acidic residues); sequence EAEKVARQKDEEAKRKAAEIARQQEEARKAAELAAKQKAEAERKARELARQKAEEAS. The segment covering 1107–1116 has biased composition (basic residues); sequence KPKRRRRRAI. A compositionally biased stretch (basic and acidic residues) spans 1207 to 1217; the sequence is SDKHPQDNTEL. In terms of domain architecture, Autotransporter spans 1280–1532; it reads ADAEKNSVWM…SGQIKIQIRF (253 aa).

It localises to the periplasm. The protein resides in the secreted. Its subcellular location is the cell surface. It is found in the cell outer membrane. The catalysed reaction is Cleavage of immunoglobulin A molecules at certain Pro-|-Xaa bonds in the hinge region. No small molecule substrates are known.. Its function is as follows. This protease is specific for immunoglobulin A. The sequence is that of IgA-specific serine endopeptidase autotransporter (iga) from Neisseria gonorrhoeae.